The sequence spans 198 residues: Uracil phosphoribosyltransferase homolog (198 aa).

Belongs to the UPRTase family.

It localises to the plastid. Its subcellular location is the chloroplast. The chain is Uracil phosphoribosyltransferase homolog from Porphyra purpurea (Red seaweed).